The primary structure comprises 289 residues: Movement protein (289 aa).

It belongs to the ilarvirus movement protein family.

It is found in the host cell junction. The protein localises to the host plasmodesma. Its function is as follows. Transports viral genome to neighboring plant cells directly through plasmosdesmata, without any budding. The movement protein allows efficient cell to cell propagation, by bypassing the host cell wall barrier. Acts by forming a tubular structure at the host plasmodesmata, enlarging it enough to allow free passage of virion capsids. The sequence is that of Movement protein from Tobacco streak virus (strain WC) (TSV).